The chain runs to 423 residues: Peroxisomal membrane protein PMP47A (423 aa).

Solcar repeat units follow at residues 6 to 120 (YDDL…TGKT), 142 to 230 (LSVW…LKSF), and 239 to 373 (ITPV…LLIL). The chain crosses the membrane as a helical span at residues 12 to 32 (AFAGAGGGLLSMTLTYPLVTL). Residues 43-53 (KKDQEKEKENS) show a composition bias toward basic and acidic residues. The segment at 43-70 (KKDQEKEKENSNEDGSLSPKSSNTSDVS) is disordered. Residues 55–70 (EDGSLSPKSSNTSDVS) show a composition bias toward polar residues. Helical transmembrane passes span 98–118 (SALF…ELTG), 148–168 (MAAG…IWVA), 204–224 (FTGI…YTIF), and 245–265 (LLLG…YITL). Residues 278-308 (SEDVEKERTDSVQSLPEDGSDEDNLKENSAK) form a disordered region. The chain crosses the membrane as a helical span at residues 353 to 373 (LLQSILNAAFLFYFKEELLIL).

Belongs to the mitochondrial carrier (TC 2.A.29) family.

It is found in the peroxisome membrane. Functionally, may have transport activity. The polypeptide is Peroxisomal membrane protein PMP47A (PMP47A) (Candida boidinii (Yeast)).